Here is a 202-residue protein sequence, read N- to C-terminus: 3-isopropylmalate dehydratase small subunit (202 aa).

This sequence belongs to the LeuD family. LeuD type 1 subfamily. In terms of assembly, heterodimer of LeuC and LeuD.

It carries out the reaction (2R,3S)-3-isopropylmalate = (2S)-2-isopropylmalate. The protein operates within amino-acid biosynthesis; L-leucine biosynthesis; L-leucine from 3-methyl-2-oxobutanoate: step 2/4. Its function is as follows. Catalyzes the isomerization between 2-isopropylmalate and 3-isopropylmalate, via the formation of 2-isopropylmaleate. The chain is 3-isopropylmalate dehydratase small subunit from Rhizobium etli (strain CIAT 652).